Reading from the N-terminus, the 261-residue chain is tRNA U34 carboxymethyltransferase (261 aa).

Residues lysine 25, tryptophan 39, lysine 44, glycine 63, 114 to 115 (VE), tyrosine 135, and arginine 250 each bind carboxy-S-adenosyl-L-methionine.

Belongs to the class I-like SAM-binding methyltransferase superfamily. CmoB family. Homotetramer.

The catalysed reaction is carboxy-S-adenosyl-L-methionine + 5-hydroxyuridine(34) in tRNA = 5-carboxymethoxyuridine(34) in tRNA + S-adenosyl-L-homocysteine + H(+). Its function is as follows. Catalyzes carboxymethyl transfer from carboxy-S-adenosyl-L-methionine (Cx-SAM) to 5-hydroxyuridine (ho5U) to form 5-carboxymethoxyuridine (cmo5U) at position 34 in tRNAs. The protein is tRNA U34 carboxymethyltransferase of Helicobacter pylori (strain P12).